The following is a 166-amino-acid chain: Putative peroxiredoxin (166 aa).

Positions 1–166 (EIGSTIPNAT…SSAATVLSKL (166 aa)) constitute a Thioredoxin domain. Residue C56 is the Cysteine sulfenic acid (-SOH) intermediate of the active site. A Microbody targeting signal motif is present at residues 164–166 (SKL).

Belongs to the peroxiredoxin family. Prx5 subfamily. Homodimer; disulfide-linked, upon oxidation.

It carries out the reaction a hydroperoxide + [thioredoxin]-dithiol = an alcohol + [thioredoxin]-disulfide + H2O. Its function is as follows. Thiol-specific peroxidase that catalyzes the reduction of hydrogen peroxide and organic hydroperoxides to water and alcohols, respectively. Plays a role in cell protection against oxidative stress by detoxifying peroxides and as sensor of hydrogen peroxide-mediated signaling events. The protein is Putative peroxiredoxin of Malassezia furfur (Pityriasis versicolor infection agent).